The primary structure comprises 173 residues: C-type lectin mosGCTL-7 (173 aa).

Residues 1–24 (MVVGWSLLGWALSWLAVATVVVSA) form the signal peptide. Residues 51 to 167 (NWFKATEYCH…CWDEYYFVCE (117 aa)) enclose the C-type lectin domain. Cystine bridges form between Cys-59–Cys-166 and Cys-139–Cys-158. Residues Asn-119 and Asn-144 are each glycosylated (N-linked (GlcNAc...) asparagine).

In terms of assembly, interacts with putative receptor-type tyrosine-protein phosphatase mosPTP-1; the interaction may mediate the recruitment of Japanese encephalitis virus particles in complex with C-type lectin mosGCTL-7 to the cell surface.

It is found in the secreted. In terms of biological role, carbohydrate-binding protein. (Microbial infection) Facilitates Japanese encephalitis virus infection in mosquitoes. In Culex quinquefasciatus (Southern house mosquito), this protein is C-type lectin mosGCTL-7.